A 755-amino-acid chain; its full sequence is Leucine-rich repeat-containing protein 36 (755 aa).

2 LRR repeats span residues 51–72 (SLRS…QYLC) and 73–94 (SLQE…SRLQ). Residues 107–146 (NPVVRKDTDYRLFAVYTLQTLEKLDDRAVRDSERRAAKLH) enclose the LRRCT domain. Disordered stretches follow at residues 354–374 (GKNY…TTSH) and 448–517 (LPPG…PPIS). Residues 356 to 370 (NYREHSIKPSQDKKA) are compositionally biased toward basic and acidic residues. Residues 498 to 510 (LSSDLGSLHGLSG) show a composition bias toward low complexity. Residues 601 to 671 (VESLKQKLVK…ELTQLKRLEE (71 aa)) adopt a coiled-coil conformation. Positions 701-755 (YSGKSLLPPEKSHPLGRSSPFGKSTLSSSSPMVHDTGQYLIQSVSEADPEPSLWS) are disordered. Polar residues predominate over residues 721–731 (FGKSTLSSSSP).

This Mus musculus (Mouse) protein is Leucine-rich repeat-containing protein 36 (Lrrc36).